The sequence spans 197 residues: Dephospho-CoA kinase (197 aa).

Positions 2-197 (IIGLTGGIAS…GAIKDLANLV (196 aa)) constitute a DPCK domain. Residue 10-15 (ASGKST) coordinates ATP.

This sequence belongs to the CoaE family.

The protein resides in the cytoplasm. The enzyme catalyses 3'-dephospho-CoA + ATP = ADP + CoA + H(+). The protein operates within cofactor biosynthesis; coenzyme A biosynthesis; CoA from (R)-pantothenate: step 5/5. Catalyzes the phosphorylation of the 3'-hydroxyl group of dephosphocoenzyme A to form coenzyme A. The chain is Dephospho-CoA kinase from Streptococcus thermophilus (strain ATCC BAA-250 / LMG 18311).